We begin with the raw amino-acid sequence, 818 residues long: G-type lectin S-receptor-like serine/threonine-protein kinase At1g67520 (818 aa).

The signal sequence occupies residues Met1–Ser22. Topologically, residues Glu23–His387 are extracellular. The Bulb-type lectin domain occupies Thr24–Leu149. N-linked (GlcNAc...) asparagine glycosylation is found at Asn123, Asn199, and Asn337. The 90-residue stretch at Cys290–Glu379 folds into the PAN domain. 2 disulfide bridges follow: Cys330–Cys353 and Cys334–Cys340. Residues Ile388–Leu408 form a helical membrane-spanning segment. Topologically, residues Arg409–Arg818 are cytoplasmic. The region spanning Phe496–Phe785 is the Protein kinase domain. Residues Leu502–Val510 and Lys524 contribute to the ATP site. A Phosphoserine modification is found at Ser530. The segment at Leu585 to Ile602 is caM-binding. The Proton acceptor role is filled by Asp621. 2 positions are modified to phosphoserine: Ser625 and Ser638. At Thr655 the chain carries Phosphothreonine. Ser699 and Ser807 each carry phosphoserine. Residue Thr813 is modified to Phosphothreonine.

It belongs to the protein kinase superfamily. Ser/Thr protein kinase family.

The protein resides in the cell membrane. It carries out the reaction L-seryl-[protein] + ATP = O-phospho-L-seryl-[protein] + ADP + H(+). It catalyses the reaction L-threonyl-[protein] + ATP = O-phospho-L-threonyl-[protein] + ADP + H(+). This is G-type lectin S-receptor-like serine/threonine-protein kinase At1g67520 from Arabidopsis thaliana (Mouse-ear cress).